We begin with the raw amino-acid sequence, 258 residues long: MANLAQPAAKELAGHPLVVIPARMASTRLPGKPLADICGTPMIVQVWRRAMEAGVGRVVVAAAEKEIADAVREAGGEAVLTDPDLPSGSDRVWQAVCEVDPEGHHTVILNVQGDLPTLDPALIRTAYEALVRPGADISTLAATITVEEERTNPNVVKAVASFGEGRLARALYFTRATAPWGEGPLYHHIGLYGYRREALARFVALPPSPLEVREKLEQLRALEAGMAIEVALVDTVPLGVDTPADLEKARAALARRSV.

Belongs to the KdsB family.

Its subcellular location is the cytoplasm. The catalysed reaction is 3-deoxy-alpha-D-manno-oct-2-ulosonate + CTP = CMP-3-deoxy-beta-D-manno-octulosonate + diphosphate. The protein operates within nucleotide-sugar biosynthesis; CMP-3-deoxy-D-manno-octulosonate biosynthesis; CMP-3-deoxy-D-manno-octulosonate from 3-deoxy-D-manno-octulosonate and CTP: step 1/1. Its pathway is bacterial outer membrane biogenesis; lipopolysaccharide biosynthesis. Its function is as follows. Activates KDO (a required 8-carbon sugar) for incorporation into bacterial lipopolysaccharide in Gram-negative bacteria. This Parvibaculum lavamentivorans (strain DS-1 / DSM 13023 / NCIMB 13966) protein is 3-deoxy-manno-octulosonate cytidylyltransferase.